Reading from the N-terminus, the 319-residue chain is Ribonuclease Z (319 aa).

Zn(2+) contacts are provided by His-62, His-64, Asp-66, His-67, His-145, Asp-215, and His-273. Asp-66 (proton acceptor) is an active-site residue.

The protein belongs to the RNase Z family. In terms of assembly, homodimer. It depends on Zn(2+) as a cofactor.

The enzyme catalyses Endonucleolytic cleavage of RNA, removing extra 3' nucleotides from tRNA precursor, generating 3' termini of tRNAs. A 3'-hydroxy group is left at the tRNA terminus and a 5'-phosphoryl group is left at the trailer molecule.. Zinc phosphodiesterase, which displays some tRNA 3'-processing endonuclease activity. Probably involved in tRNA maturation, by removing a 3'-trailer from precursor tRNA. The sequence is that of Ribonuclease Z from Borrelia hermsii (strain HS1 / DAH).